The sequence spans 212 residues: ATP-dependent dethiobiotin synthetase BioD (212 aa).

13–18 (GIGKTV) is an ATP binding site. T17 serves as a coordination point for Mg(2+). K33 is a catalytic residue. Residue S37 participates in substrate binding. Residue E100 coordinates Mg(2+). Residues 100–103 (EGAG) and 184–186 (PLL) contribute to the ATP site.

This sequence belongs to the dethiobiotin synthetase family. Homodimer. It depends on Mg(2+) as a cofactor.

The protein resides in the cytoplasm. The enzyme catalyses (7R,8S)-7,8-diammoniononanoate + CO2 + ATP = (4R,5S)-dethiobiotin + ADP + phosphate + 3 H(+). The protein operates within cofactor biosynthesis; biotin biosynthesis; biotin from 7,8-diaminononanoate: step 1/2. Functionally, catalyzes a mechanistically unusual reaction, the ATP-dependent insertion of CO2 between the N7 and N8 nitrogen atoms of 7,8-diaminopelargonic acid (DAPA, also called 7,8-diammoniononanoate) to form a ureido ring. This Brucella canis (strain ATCC 23365 / NCTC 10854 / RM-666) protein is ATP-dependent dethiobiotin synthetase BioD.